Reading from the N-terminus, the 1154-residue chain is uncharacterized protein (1154 aa).

A signal peptide spans 1-18 (MKRNIFIKLLISLLLLSS). Residue cysteine 19 is the site of N-palmitoyl cysteine attachment. A lipid anchor (S-diacylglycerol cysteine) is attached at cysteine 19. Helical transmembrane passes span 288–308 (ISVSAILTLYIMFTGLSFLIG), 394–414 (LGFIYIILYLIALYFIFFLIF), 423–443 (ALITIGMMIIMGPIFICFMLF), and 458–478 (ISYALQPIILFAGIAFISMII).

It belongs to the TrbL/VirB6 family.

It localises to the cell membrane. This is an uncharacterized protein from Rickettsia typhi (strain ATCC VR-144 / Wilmington).